Reading from the N-terminus, the 396-residue chain is Flap endonuclease 1 (396 aa).

The interval 1–104 (MGIKHLYQLI…GELAKRFQRK (104 aa)) is N-domain. Asp-34 is a Mg(2+) binding site. Arg-47 and Arg-70 together coordinate DNA. Mg(2+) is bound by residues Asp-86, Glu-158, Glu-160, Asp-179, and Asp-181. Positions 122-255 (DVEKFSRRTV…STALKLIRDH (134 aa)) are I-domain. Residue Glu-158 coordinates DNA. Gly-233 and Asp-235 together coordinate DNA. Residue Asp-235 participates in Mg(2+) binding. Residues 338 to 396 (MKSAQQSRLEGFFKPVERTPEEKASLKRKADEKLSEKKKKQKEEAKAKKQAKSKPRTAG) are disordered. Residues 342–350 (QQSRLEGFF) form an interaction with PCNA region. Positions 352-384 (PVERTPEEKASLKRKADEKLSEKKKKQKEEAKA) are enriched in basic and acidic residues. Residues 385 to 396 (KKQAKSKPRTAG) show a composition bias toward basic residues.

This sequence belongs to the XPG/RAD2 endonuclease family. FEN1 subfamily. In terms of assembly, interacts with PCNA. Three molecules of FEN1 bind to one PCNA trimer with each molecule binding to one PCNA monomer. PCNA stimulates the nuclease activity without altering cleavage specificity. The cofactor is Mg(2+). In terms of processing, phosphorylated. Phosphorylation upon DNA damage induces relocalization to the nuclear plasma.

The protein resides in the nucleus. It localises to the nucleolus. Its subcellular location is the nucleoplasm. The protein localises to the mitochondrion. Structure-specific nuclease with 5'-flap endonuclease and 5'-3' exonuclease activities involved in DNA replication and repair. During DNA replication, cleaves the 5'-overhanging flap structure that is generated by displacement synthesis when DNA polymerase encounters the 5'-end of a downstream Okazaki fragment. It enters the flap from the 5'-end and then tracks to cleave the flap base, leaving a nick for ligation. Also involved in the long patch base excision repair (LP-BER) pathway, by cleaving within the apurinic/apyrimidinic (AP) site-terminated flap. Acts as a genome stabilization factor that prevents flaps from equilibrating into structures that lead to duplications and deletions. Also possesses 5'-3' exonuclease activity on nicked or gapped double-stranded DNA, and exhibits RNase H activity. Also involved in replication and repair of rDNA and in repairing mitochondrial DNA. The protein is Flap endonuclease 1 of Phaeosphaeria nodorum (strain SN15 / ATCC MYA-4574 / FGSC 10173) (Glume blotch fungus).